The chain runs to 668 residues: MSDPFAHLLTSLKNKDSASASKETTPQSSNSPSITGSAVADVARTDKSPNDSLHSISAPPLIPSPKVDFSAPPLVPTNSTTKSNTANNTPPSALANTDDDFNQLFGMGTVTTTDTIQKPDEDYYGSKEDHLYNGDDALVDEVKDMEIARLMSLGLSIEEATEFYENDVTYERYLEILKSKQKERNDLAIRKKESGIKMEKSGLSNIVGTDSNNLFSMATDFFNKGKKLVDQWTSFPPEANDRLNNYSKTHDKVEDYDLPQVNDSPNRILFEDNEVVENLPPADNPDQDLLTDFETKIDITKRTAPDVSHSSSPTSGILIEENSRRNEPLIEDSLLDFSEGNLTNSKSNEDSTLFNENSNTDSTIPISDIELSGYNEFKAKGTSLFKNGDYINSLQEYEKSLNTLPLNHPLRIIALSNIIASQLKIGEYSKSIENSSMALELFPSSKAKWKNKISNSDPERSFNDIWPKIMIRRAESFEHLESFKKALETYQELIKKNFFDDKIMQGKRRCQDFINPPPVKKSMPVKKKTTTTSPATKKQNLTASSSNSPISVDSTSEIKKRELENAKLALYDKVFEKISSWKDGKDDDIRHLLANLSSLLTWCNWKDVSMQDLVMPKRVKITYMKAVAKTHPDKIPESLSLENKMIAENIFSTLSIAWDKFKLQNDIN.

The interval 1-95 (MSDPFAHLLT…ANNTPPSALA (95 aa)) is disordered. The segment at 1-100 (MSDPFAHLLT…PSALANTDDD (100 aa)) is CB1. Over residues 17-36 (SASASKETTPQSSNSPSITG) the composition is skewed to polar residues. S52 and S64 each carry phosphoserine. A compositionally biased stretch (low complexity) spans 76-92 (PTNSTTKSNTANNTPPS). In terms of domain architecture, UBA spans 140-180 (DEVKDMEIARLMSLGLSIEEATEFYENDVTYERYLEILKSK). A CB2 region spans residues 238–302 (EANDRLNNYS…FETKIDITKR (65 aa)). Phosphoserine occurs at positions 264, 308, and 312. Disordered stretches follow at residues 302–323 (RTAP…EENS) and 339–359 (EGNL…ENSN). The CB3 stretch occupies residues 303–362 (TAPDVSHSSSPTSGILIEENSRRNEPLIEDSLLDFSEGNLTNSKSNEDSTLFNENSNTDS). The segment covering 340-359 (GNLTNSKSNEDSTLFNENSN) has biased composition (polar residues). TPR repeat units lie at residues 374 to 407 (YNEF…LPLN), 412 to 445 (IIAL…FPSS), and 467 to 500 (PKIM…NFFD). The tract at residues 511–556 (QDFINPPPVKKSMPVKKKTTTTSPATKKQNLTASSSNSPISVDSTS) is disordered. Residues 539–555 (QNLTASSSNSPISVDST) show a composition bias toward polar residues. The 66-residue stretch at 603–668 (CNWKDVSMQD…DKFKLQNDIN (66 aa)) folds into the J domain.

As to quaternary structure, interacts with the clathrin light and heavy chains CLC1 and CHC1, respectively. Binds to clathrin with its N-terminal domain containing 3 clathrin-binding (CB) motifs. Association with clathrin is transient. Binds to polyubiquitin and ubiquitinated proteins.

Its subcellular location is the cytoplasm. It is found in the endoplasmic reticulum membrane. Its function is as follows. Cofactor for the uncoating of clathrin-coated vesicles (CCVs) by Hsp70-type chaperones (SSA1/2/3 and SSB1/2). Coat disassembly is important for fusion of vesicles with target membranes and for recycling components of clathrin coats to the cytoplasm for further rounds of vesicle formation. Binds to assembled clathrin and recruits the ATP-activated chaperone to CCVs. Stimulates the ATPase activity of the clathrin-associated Hsp70-type chaperone SSA1, which then disrupts clathrin-clathrin interactions, leading to release of the clathrin coat. In addition, prevents unproductive clathrin assembly in the cell. Also required for cortical endoplasmic reticulum inheritance. This is Auxilin-like clathrin uncoating factor SWA2 (SWA2) from Saccharomyces cerevisiae (strain ATCC 204508 / S288c) (Baker's yeast).